The primary structure comprises 404 residues: Deoxyguanosinetriphosphate triphosphohydrolase-like protein (404 aa).

Residues 69–217 (RLTHSLEVAQ…AGIADDIAYD (149 aa)) enclose the HD domain.

This sequence belongs to the dGTPase family. Type 2 subfamily.

The sequence is that of Deoxyguanosinetriphosphate triphosphohydrolase-like protein from Rhodopseudomonas palustris (strain BisB18).